We begin with the raw amino-acid sequence, 245 residues long: TPR repeat-containing protein PA4299 (245 aa).

Residues 1–16 (MKALIGIGLCAALLGG) form the signal peptide. A lipid anchor (N-palmitoyl cysteine) is attached at C17. The S-diacylglycerol cysteine moiety is linked to residue C17. 3 TPR repeats span residues 100–133 (PEAH…RPTE), 135–167 (RFRN…QQGG), and 169–200 (LPAT…DARD). Residues 210–245 (SWGAVPTPGAAPASDDPLAELPAEANMHTAMANEAP) form a disordered region.

The protein resides in the cell membrane. The chain is TPR repeat-containing protein PA4299 from Pseudomonas aeruginosa (strain ATCC 15692 / DSM 22644 / CIP 104116 / JCM 14847 / LMG 12228 / 1C / PRS 101 / PAO1).